Reading from the N-terminus, the 238-residue chain is Thrombin-like enzyme gyroxin B2.1 (238 aa).

Positions 1–229 (VIGGDECNIN…HLDWIQNIIA (229 aa)) constitute a Peptidase S1 domain. Disulfide bonds link Cys-7-Cys-141, Cys-28-Cys-44, Cys-78-Cys-236, Cys-120-Cys-190, Cys-152-Cys-169, and Cys-180-Cys-205. Catalysis depends on His-43, which acts as the Charge relay system. N-linked (GlcNAc...) asparagine glycosylation occurs at Asn-81. The active-site Charge relay system is Asp-88. Ser-184 acts as the Charge relay system in catalysis.

Belongs to the peptidase S1 family. Snake venom subfamily. Monomer. In terms of tissue distribution, expressed by the venom gland.

It is found in the secreted. In terms of biological role, thrombin-like snake venom serine protease. Displays a specificity similar to trypsin. Releases only fibrinopeptide A in the conversion of fibrinogen (FGA) to fibrin. Shows coagulant, esterase and amidase activities. Reversibly increases the permeability of the blood brain barrier (BBB) in mice. Induces the barrel rotation syndrome in mice, which is manifested by gyroxin-like, rapid rolling motions. This syndrome may be due to its effect on BBB permeability, and certainly also to other actions affecting endogenous substrates present in the endothelium, nervous tissues or blood. This Crotalus durissus terrificus (South American rattlesnake) protein is Thrombin-like enzyme gyroxin B2.1.